Here is a 418-residue protein sequence, read N- to C-terminus: Tyrosine--tRNA ligase (418 aa).

Position 34 (Y34) interacts with L-tyrosine. The 'HIGH' region signature appears at 39 to 48 (PTADSLHLGH). Y169 and Q173 together coordinate L-tyrosine. The short motif at 229 to 233 (KFGKS) is the 'KMSKS' region element. K232 contributes to the ATP binding site. Positions 352–410 (LNIVELLVTSGIVNSKRQAREDVQNGAIYVNGERVQDLDYTLSDSDKIDGELTVIRRGK) constitute an S4 RNA-binding domain.

The protein belongs to the class-I aminoacyl-tRNA synthetase family. TyrS type 1 subfamily. Homodimer.

Its subcellular location is the cytoplasm. It catalyses the reaction tRNA(Tyr) + L-tyrosine + ATP = L-tyrosyl-tRNA(Tyr) + AMP + diphosphate + H(+). Catalyzes the attachment of tyrosine to tRNA(Tyr) in a two-step reaction: tyrosine is first activated by ATP to form Tyr-AMP and then transferred to the acceptor end of tRNA(Tyr). This Streptococcus suis (strain 98HAH33) protein is Tyrosine--tRNA ligase.